The chain runs to 343 residues: Putative MO25-like protein At4g17270 (343 aa).

It belongs to the Mo25 family.

The sequence is that of Putative MO25-like protein At4g17270 from Arabidopsis thaliana (Mouse-ear cress).